We begin with the raw amino-acid sequence, 149 residues long: UPF0251 protein Moth_1655 (149 aa).

The interval 129-149 (AGRGPGRGRCHRHGRFGEGEH) is disordered.

Belongs to the UPF0251 family.

This chain is UPF0251 protein Moth_1655, found in Moorella thermoacetica (strain ATCC 39073 / JCM 9320).